A 133-amino-acid chain; its full sequence is Ribonuclease VapC1 (133 aa).

Asp7 and Asp98 together coordinate Mg(2+).

Belongs to the PINc/VapC protein family. The cofactor is Mg(2+).

Toxic component of a type II toxin-antitoxin (TA) system. The cognate antitoxin is VapB1. The polypeptide is Ribonuclease VapC1 (Mycobacterium tuberculosis (strain CDC 1551 / Oshkosh)).